A 1007-amino-acid polypeptide reads, in one-letter code: Protocadherin alpha-C2 (1007 aa).

The N-terminal stretch at 1–42 (MEQAGTRPAATEHPRLRRPMPWLLLLPLLLLLLLLLPGPAAS) is a signal peptide. Cadherin domains lie at 43-148 (QLRY…SPRF), 149-257 (PRPN…SPAF), 258-365 (DQST…APEV), 374-469 (VPEN…PPSF), and 470-579 (LEDS…APHI). The Extracellular portion of the chain corresponds to 43-708 (QLRYSVPEEQ…RTYSEITLYL (666 aa)). N-linked (GlcNAc...) asparagine glycosylation is found at Asn280 and Asn436. N-linked (GlcNAc...) asparagine glycans are attached at residues Asn586 and Asn657. A Cadherin 6 domain is found at 594–691 (VPRTAPAGYL…DRVSKILPDT (98 aa)). A helical transmembrane segment spans residues 709 to 729 (IIALSTVSFIFLLTIIILSII). Topologically, residues 730–1007 (KCYRYTAYGT…GNSTTDNSDQ (278 aa)) are cytoplasmic. 4 PXXP repeats span residues 856–859 (PRQP), 889–892 (PGGP), 930–933 (PGNP), and 948–951 (PGSP). The 4 X 4 AA repeats of P-X-X-P stretch occupies residues 856–951 (PRQPNPDWRY…PDKFIIPGSP (96 aa)). Residues 885–1007 (LRAGPGGPDQ…GNSTTDNSDQ (123 aa)) are disordered. Positions 966–980 (DKSDFITFGKKEETK) are enriched in basic and acidic residues.

It localises to the cell membrane. In terms of biological role, potential calcium-dependent cell-adhesion protein. May be involved in the establishment and maintenance of specific neuronal connections in the brain. In Homo sapiens (Human), this protein is Protocadherin alpha-C2 (PCDHAC2).